The primary structure comprises 205 residues: S-crystallin SL11 (205 aa).

A GST N-terminal domain is found at 2–80 (PSYTLYYFNG…YLAREFGFYG (79 aa)). In terms of domain architecture, GST C-terminal spans 82 to 205 (NNMDMFKVDC…YIKKRNNTAF (124 aa)).

Belongs to the GST superfamily. In terms of tissue distribution, lens.

Functionally, S-crystallins are structural components of squids and octopi eye lens. Contains relatively little if any GST activity. The chain is S-crystallin SL11 from Nototodarus sloanii (Wellington flying squid).